Reading from the N-terminus, the 364-residue chain is DNA polymerase IV (364 aa).

The UmuC domain occupies I14 to G198. Mg(2+)-binding residues include D18 and D116. E117 is an active-site residue.

This sequence belongs to the DNA polymerase type-Y family. In terms of assembly, monomer. Mg(2+) serves as cofactor.

It is found in the cytoplasm. The enzyme catalyses DNA(n) + a 2'-deoxyribonucleoside 5'-triphosphate = DNA(n+1) + diphosphate. Poorly processive, error-prone DNA polymerase involved in untargeted mutagenesis. Copies undamaged DNA at stalled replication forks, which arise in vivo from mismatched or misaligned primer ends. These misaligned primers can be extended by PolIV. Exhibits no 3'-5' exonuclease (proofreading) activity. May be involved in translesional synthesis, in conjunction with the beta clamp from PolIII. The sequence is that of DNA polymerase IV from Streptococcus agalactiae serotype Ia (strain ATCC 27591 / A909 / CDC SS700).